The sequence spans 412 residues: MSVPTHQQDLIALLEERGFVHQCTDRDGLAAHLAAGPATAYLGFDATADSLHVGHLQGLMLMRWLQKAGHRPLLLIGGATTRIGDPSFRDSSRPILTEAQIQANIDGIARVFSRYVELHDDSLVNNAEWLDGVGYLEFLDRVGRHFSINRLLTFDAIRQRLDREHSLSFLEFGYTLLQAYDFVELSRRRGCTLQLGGADQWANIINGVELSRRQGGAQLFGLTMPLLATSDGRKMGKSAQGAVWLNAERLAPFDFWQFWRNCDDRDVGRFLALFSELPMDEVRRLGALQGAELNEAKVVLANAATALAHGEHAARSAADAARGVFADGTRDSGLPVMKLSRARLAQGLSLTDLLLEHAIQPSRSAVRRLAAGGGLRLDGTPVSDPDAPLAGEVDGLRLSLGKKQHLHLRLED.

Tyr-41 lines the L-tyrosine pocket. The 'HIGH' region signature appears at 46–55; the sequence is ATADSLHVGH. L-tyrosine is bound by residues Tyr-174 and Gln-178. The short motif at 234–238 is the 'KMSKS' region element; the sequence is KMGKS. Lys-237 provides a ligand contact to ATP. Residues 348–411 form the S4 RNA-binding domain; sequence LSLTDLLLEH…KKQHLHLRLE (64 aa).

The protein belongs to the class-I aminoacyl-tRNA synthetase family. TyrS type 1 subfamily. Homodimer.

The protein resides in the cytoplasm. It carries out the reaction tRNA(Tyr) + L-tyrosine + ATP = L-tyrosyl-tRNA(Tyr) + AMP + diphosphate + H(+). Functionally, catalyzes the attachment of tyrosine to tRNA(Tyr) in a two-step reaction: tyrosine is first activated by ATP to form Tyr-AMP and then transferred to the acceptor end of tRNA(Tyr). The sequence is that of Tyrosine--tRNA ligase from Pseudomonas aeruginosa (strain LESB58).